A 372-amino-acid chain; its full sequence is Adaptive-response sensory kinase SasA (372 aa).

The 214-residue stretch at Met147–Gln360 folds into the Histidine kinase domain. His150 is modified (phosphohistidine; by autocatalysis).

Homooligomerizes. Interacts with KaiC. Participates in the KaiBC complex, whose core is composed of a KaiC homohexamer and 6 KaiB.

The enzyme catalyses ATP + protein L-histidine = ADP + protein N-phospho-L-histidine.. Its function is as follows. Member of the two-component regulatory system SasA/RpaA involved in genome-wide circadian gene expression. One of several clock output pathways. Participates in the Kai clock protein complex, the main circadian regulator in cyanobacteria, via its interaction with KaiC. KaiC enhances the autophosphorylation activity of SasA, which then transfers its phosphate group to RpaA to activate it. In addition to its output function, recruits fold-shifted KaiB (KaiB(fs)) to KaiC to cooperatively form the KaiB(6):KaiC(6) complex (independent of SasA kinase activity). Required for robustness of the circadian rhythm of gene expression and is involved in clock output, also required for adaptation to light/dark cycles. The chain is Adaptive-response sensory kinase SasA from Prochlorococcus marinus (strain MIT 9301).